The primary structure comprises 200 residues: MMMFGKISRQLCSLKKIPWSCDSRYFWEWLNTVFNKVDYERLRDVGPDRAASEWLLRCGAKVRYCGHQKWLHDYNTLPGSSIDRYKIQAIDATDSCIMDIGLDHMVGLEHVEKITLCKCHYIEDNCLQRLSQLENLRKSLLELEIIACGNVTDNGVIALRHFRNLKYLFLSDLPGVKDKEYLAQVFKTALPSLELKLNLK.

Residues 1 to 25 (MMMFGKISRQLCSLKKIPWSCDSRY) constitute a mitochondrion transit peptide. An N-terminal domain region spans residues 1-61 (MMMFGKISRQ…SEWLLRCGAK (61 aa)). Gly59 serves as a coordination point for Mg(2+). LRR repeat units follow at residues 62–87 (VRYC…RYKI), 88–116 (QAID…KITL), 117–141 (CKCH…KSLL), and 142–173 (ELEI…LSDL). Residue Thr93 coordinates Mg(2+).

This sequence belongs to the ATP synthase subunit s family. In terms of assembly, homotetramer. Associates with ATP synthase.

Its subcellular location is the mitochondrion. It localises to the mitochondrion inner membrane. Its function is as follows. Involved in regulation of mitochondrial membrane ATP synthase. Necessary for H(+) conduction of ATP synthase. Facilitates energy-driven catalysis of ATP synthesis by blocking a proton leak through an alternative proton exit pathway. The chain is ATP synthase subunit s, mitochondrial (Dmac2l) from Mus musculus (Mouse).